The chain runs to 377 residues: uncharacterized protein (377 aa).

The next 2 helical transmembrane spans lie at 71 to 91 and 140 to 160; these read IIAT…LVGS and AEAA…PTLF.

The protein resides in the membrane. This is an uncharacterized protein from Coxiella burnetii (strain RSA 493 / Nine Mile phase I).